The sequence spans 150 residues: Large ribosomal subunit protein bL9 (150 aa).

This sequence belongs to the bacterial ribosomal protein bL9 family.

In terms of biological role, binds to the 23S rRNA. This Streptococcus pyogenes serotype M18 (strain MGAS8232) protein is Large ribosomal subunit protein bL9.